A 1770-amino-acid polypeptide reads, in one-letter code: AF4/FMR2 family member lilli (1770 aa).

Composition is skewed to low complexity over residues 1 to 19 (MAQQ…HPHQ), 154 to 204 (LGHS…YLKQ), and 227 to 269 (PSSS…GTTP). 6 disordered regions span residues 1 to 28 (MAQQ…NQLQ), 134 to 327 (SRHA…EKDI), 402 to 660 (TSLL…PGNV), 761 to 805 (LHSA…LQLP), 822 to 1173 (MQKA…KQGQ), and 1291 to 1390 (KHEH…QISK). Polar residues predominate over residues 402–414 (TSLLTTPPHASQG). Residues 434-447 (KAAAALSPTAAAKP) are compositionally biased toward low complexity. Over residues 448 to 461 (LKTEKNHTLEKQDS) the composition is skewed to basic and acidic residues. Positions 463 to 474 (LENDLELSESED) are enriched in acidic residues. Ser470 and Ser472 each carry phosphoserine. The span at 483–503 (SAGNSSNSSESDSSESGSESS) shows a compositional bias: low complexity. The segment covering 511 to 520 (QHHHHNHHHQ) has biased composition (basic residues). Over residues 521–552 (QQQQQLQQQQQQQLLQQKQQHQQILQQQQRQL) the composition is skewed to low complexity. Gly residues predominate over residues 582–614 (FGSGGAGNGGCSTASSGGGGGGSGSGGGSGSSS). Positions 615 to 625 (GIGTMSSGSSS) are enriched in low complexity. Composition is skewed to polar residues over residues 626–638 (NKTP…NKWT) and 647–659 (ANQT…SPGN). Residues 768-800 (SDSGTSGSGSTSSSSSSSDSAPGEVVPMPGPGE) are compositionally biased toward low complexity. Over residues 844 to 854 (QRQKKPRKKKP) the composition is skewed to basic residues. Phosphoserine occurs at positions 863 and 864. 5 stretches are compositionally biased toward low complexity: residues 880–893 (AAAA…ATAT), 909–928 (QQQS…SSSQ), 994–1028 (ANAS…SSSS), 1071–1081 (SGSSSPSSSSS), and 1111–1131 (SQHS…SSTS). The segment at residues 900-912 (KKGRGRPRKQQQS) is a DNA-binding region (a.T hook). 2 positions are modified to phosphoserine: Ser920 and Ser922. 2 stretches are compositionally biased toward basic and acidic residues: residues 1295–1312 (PHPV…ESKF) and 1321–1355 (FQLK…EREQ). The residue at position 1442 (Ser1442) is a Phosphoserine. Composition is skewed to low complexity over residues 1483-1499 (AAAT…TSTA) and 1656-1676 (GNTP…SGSN). Disordered regions lie at residues 1483 to 1502 (AAAT…APPA) and 1656 to 1683 (GNTP…GKIV).

The protein belongs to the AF4 family.

Its subcellular location is the nucleus. Its function is as follows. Has a role in transcriptional regulation. Acts in parallel with the Ras/MAPK and the PI3K/PKB pathways in the control of cell identity and cellular growth. Essential for regulation of the cytoskeleton and cell growth but not for cell proliferation or growth rate. Required specifically for the microtubule-based basal transport of lipid droplets. Plays a partially redundant function downstream of Raf in cell fate specification in the developing eye. Pair-rule protein that regulates embryonic cellularization, gastrulation and segmentation. The sequence is that of AF4/FMR2 family member lilli from Drosophila pseudoobscura pseudoobscura (Fruit fly).